A 217-amino-acid polypeptide reads, in one-letter code: Probable transaldolase (217 aa).

The Schiff-base intermediate with substrate role is filled by lysine 85.

The protein belongs to the transaldolase family. Type 3B subfamily.

The protein resides in the cytoplasm. It carries out the reaction D-sedoheptulose 7-phosphate + D-glyceraldehyde 3-phosphate = D-erythrose 4-phosphate + beta-D-fructose 6-phosphate. It functions in the pathway carbohydrate degradation; pentose phosphate pathway; D-glyceraldehyde 3-phosphate and beta-D-fructose 6-phosphate from D-ribose 5-phosphate and D-xylulose 5-phosphate (non-oxidative stage): step 2/3. Transaldolase is important for the balance of metabolites in the pentose-phosphate pathway. The chain is Probable transaldolase from Agathobacter rectalis (strain ATCC 33656 / DSM 3377 / JCM 17463 / KCTC 5835 / VPI 0990) (Eubacterium rectale).